A 593-amino-acid polypeptide reads, in one-letter code: UvrABC system protein C (593 aa).

In terms of domain architecture, GIY-YIG spans 14 to 91 (DKPGCYLMKN…IKEHDPRYNV (78 aa)). A UVR domain is found at 196 to 231 (EEMKQTLTEKMLQAAENMEFERAKEYRDQIKSIEAV).

Belongs to the UvrC family. As to quaternary structure, interacts with UvrB in an incision complex.

The protein localises to the cytoplasm. In terms of biological role, the UvrABC repair system catalyzes the recognition and processing of DNA lesions. UvrC both incises the 5' and 3' sides of the lesion. The N-terminal half is responsible for the 3' incision and the C-terminal half is responsible for the 5' incision. This Brevibacillus brevis (strain 47 / JCM 6285 / NBRC 100599) protein is UvrABC system protein C.